Reading from the N-terminus, the 358-residue chain is Peptide chain release factor 1 (358 aa).

N5-methylglutamine is present on Gln236.

The protein belongs to the prokaryotic/mitochondrial release factor family. Methylated by PrmC. Methylation increases the termination efficiency of RF1.

The protein localises to the cytoplasm. In terms of biological role, peptide chain release factor 1 directs the termination of translation in response to the peptide chain termination codons UAG and UAA. This Corynebacterium efficiens (strain DSM 44549 / YS-314 / AJ 12310 / JCM 11189 / NBRC 100395) protein is Peptide chain release factor 1.